The following is a 378-amino-acid chain: uncharacterized protein (378 aa).

This sequence belongs to the mimivirus L17x/L18x family.

This is an uncharacterized protein from Acanthamoeba polyphaga (Amoeba).